A 131-amino-acid chain; its full sequence is Arsenate reductase 2 (131 aa).

Active-site nucleophile residues include C10, C82, and C89. 2 cysteine pairs are disulfide-bonded: C10-C82 and C82-C89.

The protein belongs to the low molecular weight phosphotyrosine protein phosphatase family. Thioredoxin-coupled ArsC subfamily.

It localises to the cytoplasm. It carries out the reaction arsenate + [thioredoxin]-dithiol + H(+) = arsenite + [thioredoxin]-disulfide + H2O. Functionally, catalyzes the reduction of arsenate [As(V)] to arsenite [As(III)]. The chain is Arsenate reductase 2 from Staphylococcus saprophyticus subsp. saprophyticus (strain ATCC 15305 / DSM 20229 / NCIMB 8711 / NCTC 7292 / S-41).